Consider the following 132-residue polypeptide: Fertilization-influencing membrane protein (132 aa).

Residues 100–120 (PGLFHHILVGLLVVAFFFLLF) traverse the membrane as a helical segment.

Testis-specific.

It is found in the cell membrane. In terms of biological role, may play a role in sperm-oocyte fusion during fertilization. In Homo sapiens (Human), this protein is Fertilization-influencing membrane protein.